The following is a 64-amino-acid chain: Large ribosomal subunit protein bL35 (64 aa).

Residues 1 to 41 (MPKMKSHSGASKRFKVSGKGKLLRQQANRRHLLEHKPSRRT) form a disordered region.

It belongs to the bacterial ribosomal protein bL35 family.

In Nocardia farcinica (strain IFM 10152), this protein is Large ribosomal subunit protein bL35.